The primary structure comprises 994 residues: Glycine dehydrogenase (decarboxylating), mitochondrial (994 aa).

The N-terminal 21 residues, 1 to 21 (MLKLLRNNGINKLKSNLIRNY), are a transit peptide targeting the mitochondrion. K742 is subject to N6-(pyridoxal phosphate)lysine.

It belongs to the GcvP family. As to quaternary structure, homodimer. The glycine cleavage system is composed of four proteins: P, T, L and H. The cofactor is pyridoxal 5'-phosphate.

It localises to the mitochondrion. It carries out the reaction N(6)-[(R)-lipoyl]-L-lysyl-[glycine-cleavage complex H protein] + glycine + H(+) = N(6)-[(R)-S(8)-aminomethyldihydrolipoyl]-L-lysyl-[glycine-cleavage complex H protein] + CO2. In terms of biological role, the glycine cleavage system catalyzes the degradation of glycine. The P protein binds the alpha-amino group of glycine through its pyridoxal phosphate cofactor; CO(2) is released and the remaining methylamine moiety is then transferred to the lipoamide cofactor of the H protein. The sequence is that of Glycine dehydrogenase (decarboxylating), mitochondrial (gcvP) from Dictyostelium discoideum (Social amoeba).